A 249-amino-acid polypeptide reads, in one-letter code: NH(3)-dependent NAD(+) synthetase (249 aa).

29-36 (GVSGGVDS) is an ATP binding site. D35 contacts Mg(2+). A deamido-NAD(+)-binding site is contributed by R116. T136 provides a ligand contact to ATP. Residue E141 participates in Mg(2+) binding. Deamido-NAD(+)-binding residues include K149 and D156. Residues K165 and S187 each contribute to the ATP site. Position 233 to 234 (233 to 234 (HK)) interacts with deamido-NAD(+).

This sequence belongs to the NAD synthetase family. Homodimer.

It catalyses the reaction deamido-NAD(+) + NH4(+) + ATP = AMP + diphosphate + NAD(+) + H(+). It participates in cofactor biosynthesis; NAD(+) biosynthesis; NAD(+) from deamido-NAD(+) (ammonia route): step 1/1. Its function is as follows. Catalyzes the ATP-dependent amidation of deamido-NAD to form NAD. Uses ammonia as a nitrogen source. The polypeptide is NH(3)-dependent NAD(+) synthetase (Syntrophomonas wolfei subsp. wolfei (strain DSM 2245B / Goettingen)).